The primary structure comprises 1734 residues: Complement C4-A (1734 aa).

The signal sequence occupies residues 1-19 (MRLLWGLAWVFSFCASSLQ). Cysteine 66 and cysteine 95 are oxidised to a cystine. A glycan (N-linked (GlcNAc...) asparagine) is linked at asparagine 224. The cysteines at positions 633 and 667 are disulfide-linked. Positions 674-677 (RQKR) are excised as a propeptide. 3 disulfides stabilise this stretch: cysteine 700/cysteine 726, cysteine 701/cysteine 733, and cysteine 714/cysteine 734. Residues 700–734 (CCQDGMTKLPMKRTCEQRAARVPQQACREPFLSCC) form the Anaphylatoxin-like domain. 2 N-linked (GlcNAc...) asparagine glycosylation sites follow: asparagine 743 and asparagine 859. The isoglutamyl cysteine thioester (Cys-Gln) cross-link spans 1002–1005 (CAEQ). 2 N-linked (GlcNAc...) asparagine glycosylation sites follow: asparagine 1128 and asparagine 1383. Tyrosine 1409 carries the sulfotyrosine modification. Positions 1437-1443 (RRSRRRR) are excised as a propeptide. Disulfide bonds link cysteine 1461–cysteine 1525, cysteine 1573–cysteine 1578, cysteine 1585–cysteine 1663, cysteine 1608–cysteine 1732, and cysteine 1708–cysteine 1717. The NTR domain occupies 1585–1732 (CPRLLRSLER…FLMEFSSRGC (148 aa)).

In terms of assembly, in absence of complement activation, circulates in blood as a disulfide-linked trimer of an alpha, beta and gamma chain. Complement C4b is composed of Complement C4b-A, Complement C4 beta and Complement C4 gamma chains that are associated via disulfide bonds. Non-enzymatic component of the C3 convertase, also named C4bC2b, composed of the serine protease complement C2b (C2), as well as complement C4b. Non-enzymatic component of the C5 convertase, also named C4bC2bC3b, composed of the serine protease complement C2b (C2), complement C3b, as well as complement C4b. Prior to secretion, the single-chain precursor is enzymatically cleaved by plasminogen (PLG) to yield non-identical chains alpha, beta and gamma. During activation of the complement systems, the alpha chain is cleaved into C4a and C4b by different proteases depending on the complement pathway: C4b stays linked to the beta and gamma chains, while C4a is released in the plasma. The alpha chain is cleaved by C1S to generate C4a and C4b following activation by the classical complement system. The alpha chain is cleaved to generate C4a and C4b by MASP2 following activation by the lectin complement system. The alpha chain is cleaved by GZMK to generate C4a and C4b following activation by the GZMK complement system. Further degradation of C4b by C1 into the inactive fragments C4c and C4d blocks the generation of C3 convertase. The proteolytic cleavages often are incomplete so that many structural forms can be found in plasma. In terms of processing, upon activation, the internal thioester bond reacts with carbohydrate antigens on the target surface to form amide or ester bonds, leading to covalent association with the surface of pathogens. Post-translationally, complement C4b interacts with complement C3b via a thioester linkage. N- and O-glycosylated. O-glycosylated with a core 1 or possibly core 8 glycan.

It localises to the secreted. The protein resides in the synapse. Its subcellular location is the cell projection. It is found in the axon. The protein localises to the dendrite. It localises to the cell surface. Specifically inhibited by nanobody hC4Nb8, inhibiting the classical complement pathway. In terms of biological role, precursor of non-enzymatic components of the classical, lectin and GZMK complement pathways, which consist in a cascade of proteins that leads to phagocytosis and breakdown of pathogens and signaling that strengthens the adaptive immune system. Non-enzymatic component of C3 and C5 convertases. Generated following cleavage by complement proteases (C1S, MASP2 or GZMK, depending on the complement pathway), it covalently attaches to the surface of pathogens, where it acts as an opsonin that marks the surface of antigens for removal. It then recruits the serine protease complement C2b to form the C3 and C5 convertases, which cleave and activate C3 and C5, respectively, the next components of the complement pathways. Complement C4b-A isotype is responsible for effective binding to form amide bonds with immune aggregates or protein antigens, while complement C4b-B isotype catalyzes the transacylation of the thioester carbonyl group to form ester bonds with carbohydrate antigens. Functionally, putative humoral mediator released following cleavage by complement proteases (C1S, MASP2 or GZMK, depending on the complement pathway). While it is strongly similar to anaphylatoxins, its role is unclear. Was reported to act as a mediator of local inflammatory process; however these effects were probably due to contamination with C3a and/C5a anaphylatoxins in biological assays. The chain is Complement C4-A from Mus musculus (Mouse).